A 605-amino-acid polypeptide reads, in one-letter code: Protein DENND6A (605 aa).

The disordered stretch occupies residues 1 to 20; that stretch reads MALPGPAVFGPGSRGSLDEA. In terms of domain architecture, uDENN spans 60–239; it reads HCVCVVGFDL…KVRIPTCHDK (180 aa). Ser-124 is modified (phosphoserine). In terms of domain architecture, cDENN spans 265-390; it reads EVDLFRCFCP…VKVKKLKNLK (126 aa). One can recognise a dDENN domain in the interval 392–525; that stretch reads LDSKPGVYTS…KTRRKEMTQK (134 aa). The residue at position 507 (Lys-507) is an N6-methyllysine.

It belongs to the DENND6 family.

It is found in the recycling endosome. The protein resides in the cytoplasm. Guanine nucleotide exchange factor (GEF) for RAB14. Component of an endocytic recycling pathway that is required for the control of ADAM10 transport, shedding of N-cadherin/CDH2 by ADAM9 or ADAM10 and regulation of cell-cell junctions. Required for RAB14 recruitment to recycling endosomes. The sequence is that of Protein DENND6A (Dennd6a) from Mus musculus (Mouse).